We begin with the raw amino-acid sequence, 232 residues long: Octanoyltransferase (232 aa).

The BPL/LPL catalytic domain maps to 32-219; that stretch reads NIIYDTLILL…SFKVFNFSSY (188 aa). Residues 77-84, 140-142, and 153-155 each bind substrate; these read RGGDITYH, AIG, and GFA. Cys171 functions as the Acyl-thioester intermediate in the catalytic mechanism.

The protein belongs to the LipB family.

It is found in the cytoplasm. It carries out the reaction octanoyl-[ACP] + L-lysyl-[protein] = N(6)-octanoyl-L-lysyl-[protein] + holo-[ACP] + H(+). It functions in the pathway protein modification; protein lipoylation via endogenous pathway; protein N(6)-(lipoyl)lysine from octanoyl-[acyl-carrier-protein]: step 1/2. Catalyzes the transfer of endogenously produced octanoic acid from octanoyl-acyl-carrier-protein onto the lipoyl domains of lipoate-dependent enzymes. Lipoyl-ACP can also act as a substrate although octanoyl-ACP is likely to be the physiological substrate. The polypeptide is Octanoyltransferase (Dictyoglomus turgidum (strain DSM 6724 / Z-1310)).